We begin with the raw amino-acid sequence, 224 residues long: UPF0758 protein PD_0117 (224 aa).

One can recognise an MPN domain in the interval 102-224 (SIHDPISAGR…PVSFAEHGWL (123 aa)). Residues His-173, His-175, and Asp-186 each coordinate Zn(2+). The short motif at 173-186 (HNHPSGNREPSPAD) is the JAMM motif element.

It belongs to the UPF0758 family.

The sequence is that of UPF0758 protein PD_0117 from Xylella fastidiosa (strain Temecula1 / ATCC 700964).